Reading from the N-terminus, the 749-residue chain is Cytosolic phospholipase A2 (749 aa).

A phospholipid binding region spans residues 1–178 (MSFIDPYQHI…MKKLLGPKKS (178 aa)). Residue S2 is modified to Phosphoserine. Residues 6–122 (PYQHIIVEHQ…KVGEKKEVPF (117 aa)) form the C2 domain. Ca(2+) is bound by residues D40, T41, D43, N65, D93, A94, and N95. The PLA2c domain occupies 140 to 740 (SCPDLRFSMA…SNVEARRFFN (601 aa)). S228 functions as the Nucleophile in the catalytic mechanism. T268 bears the Phosphothreonine mark. Residues 427–456 (KHIVSNDSSDSDDESQEPKGTENEDAERDY) are disordered. Phosphoserine is present on residues S434, S435, and S437. Residue S505 is modified to Phosphoserine; by MAPK. S515 bears the Phosphoserine mark. Residue K541 forms a Glycyl lysine isopeptide (Lys-Gly) (interchain with G-Cter in SUMO2) linkage. D549 functions as the Proton acceptor in the catalytic mechanism. A Glycyl lysine isopeptide (Lys-Gly) (interchain with G-Cter in SUMO2) cross-link involves residue K606. A phosphoserine mark is found at S727 and S729.

In terms of assembly, interacts with KAT5. In terms of processing, phosphorylated at both Ser-505 and Ser-727 in response to mitogenic stimuli.

Its subcellular location is the cytoplasm. The protein localises to the golgi apparatus membrane. It localises to the nucleus envelope. It catalyses the reaction a 1,2-diacyl-sn-glycero-3-phosphocholine + H2O = a 1-acyl-sn-glycero-3-phosphocholine + a fatty acid + H(+). The catalysed reaction is a 1-O-alkyl-2-acyl-sn-glycero-3-phosphocholine + H2O = a 1-O-alkyl-sn-glycero-3-phosphocholine + a fatty acid + H(+). It carries out the reaction a 1-acyl-sn-glycero-3-phosphocholine + H2O = sn-glycerol 3-phosphocholine + a fatty acid + H(+). The enzyme catalyses 1-hexadecanoyl-2-(5Z,8Z,11Z,14Z-eicosatetraenoyl)-sn-glycero-3-phosphocholine + H2O = 1-hexadecanoyl-sn-glycero-3-phosphocholine + (5Z,8Z,11Z,14Z)-eicosatetraenoate + H(+). It catalyses the reaction 1,2-di-(5Z,8Z,11Z,14Z-eicosatetraenoyl)-sn-glycero-3-phosphocholine + H2O = 1-(5Z,8Z,11Z,14Z-eicosatetraenoyl)-sn-glycero-3-phosphocholine + (5Z,8Z,11Z,14Z)-eicosatetraenoate + H(+). The catalysed reaction is 1-octadecanoyl-2-(5Z,8Z,11Z,14Z-eicosatetraenoyl)-sn-glycero-3-phosphocholine + H2O = 1-octadecanoyl-sn-glycero-3-phosphocholine + (5Z,8Z,11Z,14Z)-eicosatetraenoate + H(+). It carries out the reaction 1-hexadecanoyl-2-(9Z,12Z-octadecadienoyl)-sn-glycero-3-phosphocholine + H2O = (9Z,12Z)-octadecadienoate + 1-hexadecanoyl-sn-glycero-3-phosphocholine + H(+). The enzyme catalyses 1-octadecanoyl-2-(9Z,12Z,15Z-octadecatrienoyl)-sn-glycero-3-phosphocholine + H2O = (9Z,12Z,15Z)-octadecatrienoate + 1-octadecanoyl-sn-glycero-3-phosphocholine + H(+). It catalyses the reaction 1-(5Z,8Z,11Z,14Z-eicosatetraenoyl)-2-hexadecanoyl-sn-glycero-3-phosphocholine + H2O = 1-(5Z,8Z,11Z,14Z-eicosatetraenoyl)-sn-glycero-3-phosphocholine + hexadecanoate + H(+). The catalysed reaction is 1-O-hexadecyl-2-(5Z,8Z,11Z,14Z)-eicosatetraenoyl-sn-glycero-3-phosphocholine + H2O = 1-O-hexadecyl-sn-glycero-3-phosphocholine + (5Z,8Z,11Z,14Z)-eicosatetraenoate + H(+). It carries out the reaction 1,2-di-(9Z-octadecenoyl)-sn-glycero-3-phospho-(1'-sn-glycerol) + H2O = 1-(9Z-octadecenoyl)-sn-glycero-3-phospho-(1'-sn-glycerol) + (9Z)-octadecenoate + H(+). The enzyme catalyses 1-octadecanoyl-2-(5Z,8Z,11Z,14Z-eicosatetraenoyl)-sn-glycero-3-phosphate + H2O = 1-octadecanoyl-sn-glycero-3-phosphate + (5Z,8Z,11Z,14Z)-eicosatetraenoate + H(+). It catalyses the reaction 1-hexadecanoyl-sn-glycero-3-phosphocholine + H2O = sn-glycerol 3-phosphocholine + hexadecanoate + H(+). The catalysed reaction is 2-(prostaglandin E2)-sn-glycero-3-phosphoethanolamine + H2O = sn-glycero-3-phosphoethanolamine + prostaglandin E2 + H(+). It carries out the reaction 2-[(15S)-hydroxy-(5Z,8Z,11Z,13E)-eicosatetraenoyl]-sn-glycero-3-phosphocholine + H2O = (15S)-hydroxy-(5Z,8Z,11Z,13E)-eicosatetraenoate + sn-glycerol 3-phosphocholine + H(+). The enzyme catalyses 2-[(15R)-hydroxy-(5Z,8Z,11Z,13E)-eicosatetraenoyl]-sn-glycero-3-phosphocholine + H2O = (15R)-hydroxy-(5Z,8Z,11Z,13E)-eicosatetraenoate + sn-glycerol 3-phosphocholine + H(+). It catalyses the reaction 2-(prostaglandin E2)-sn-glycero-3-phosphocholine + H2O = prostaglandin E2 + sn-glycerol 3-phosphocholine + H(+). The catalysed reaction is 2-[(11R)-hydroxy-(5Z,8Z,12E,14Z)-eicosatetraenoyl]-sn-glycero-3-phosphocholine + H2O = (11R)-hydroxy-(5Z,8Z,12E,14Z)-eicosatetraenoate + sn-glycerol 3-phosphocholine + H(+). It carries out the reaction 1-(5Z,8Z,11Z,14Z-eicosatetraenoyl)-2-O-hexadecyl-sn-glycero-3-phosphocholine + H2O = 2-O-hexadecyl-sn-glycero-3-phosphocholine + (5Z,8Z,11Z,14Z)-eicosatetraenoate + H(+). The enzyme catalyses 1-octadecanoyl-2-(5Z,8Z,11Z,14Z-eicosatetraenoyl)-sn-glycero-3-phosphocholine + glycerol = 1-(5Z,8Z,11Z,14Z-eicosatetraenoyl)-glycerol + 1-octadecanoyl-sn-glycero-3-phosphocholine. It catalyses the reaction 1-octadecanoyl-2-(9Z,12Z,15Z-octadecatrienoyl)-sn-glycero-3-phosphocholine + glycerol = 1-(9Z,12Z,15Z-octadecatrienoyl)-glycerol + 1-octadecanoyl-sn-glycero-3-phosphocholine. It functions in the pathway membrane lipid metabolism; glycerophospholipid metabolism. The protein operates within lipid metabolism; arachidonate metabolism. Its pathway is lipid metabolism; prostaglandin biosynthesis. It participates in lipid metabolism; leukotriene B4 biosynthesis. With respect to regulation, activated by cytosolic calcium, which is necessary for binding to membrane lipids. Activated by phosphorylation in response to mitogenic stimuli. Functionally, has primarily calcium-dependent phospholipase and lysophospholipase activities, with a major role in membrane lipid remodeling and biosynthesis of lipid mediators of the inflammatory response. Plays an important role in embryo implantation and parturition through its ability to trigger prostanoid production. Preferentially hydrolyzes the ester bond of the fatty acyl group attached at sn-2 position of phospholipids (phospholipase A2 activity). Selectively hydrolyzes sn-2 arachidonoyl group from membrane phospholipids, providing the precursor for eicosanoid biosynthesis via the cyclooxygenase pathway. In an alternative pathway of eicosanoid biosynthesis, hydrolyzes sn-2 fatty acyl chain of eicosanoid lysophopholipids to release free bioactive eicosanoids. Hydrolyzes the ester bond of the fatty acyl group attached at sn-1 position of phospholipids (phospholipase A1 activity) only if an ether linkage rather than an ester linkage is present at the sn-2 position. This hydrolysis is not stereospecific. Has calcium-independent phospholipase A2 and lysophospholipase activities in the presence of phosphoinositides. Has O-acyltransferase activity. Catalyzes the transfer of fatty acyl chains from phospholipids to a primary hydroxyl group of glycerol (sn-1 or sn-3), potentially contributing to monoacylglycerol synthesis. The protein is Cytosolic phospholipase A2 (PLA2G4A) of Equus caballus (Horse).